Consider the following 164-residue polypeptide: Protein-export protein SecB (164 aa).

It belongs to the SecB family. As to quaternary structure, homotetramer, a dimer of dimers. One homotetramer interacts with 1 SecA dimer.

The protein localises to the cytoplasm. One of the proteins required for the normal export of preproteins out of the cell cytoplasm. It is a molecular chaperone that binds to a subset of precursor proteins, maintaining them in a translocation-competent state. It also specifically binds to its receptor SecA. In Pseudomonas syringae pv. tomato (strain ATCC BAA-871 / DC3000), this protein is Protein-export protein SecB.